The chain runs to 697 residues: Elongation factor G (697 aa).

The tr-type G domain occupies 6–281 (ENIRNIGICA…AVVDYLPSPI (276 aa)). GTP contacts are provided by residues 15–22 (AHIDAGKT), 79–83 (DTPGH), and 133–136 (NKMD).

The protein belongs to the TRAFAC class translation factor GTPase superfamily. Classic translation factor GTPase family. EF-G/EF-2 subfamily.

It localises to the cytoplasm. Its function is as follows. Catalyzes the GTP-dependent ribosomal translocation step during translation elongation. During this step, the ribosome changes from the pre-translocational (PRE) to the post-translocational (POST) state as the newly formed A-site-bound peptidyl-tRNA and P-site-bound deacylated tRNA move to the P and E sites, respectively. Catalyzes the coordinated movement of the two tRNA molecules, the mRNA and conformational changes in the ribosome. This is Elongation factor G from Rickettsia bellii (strain OSU 85-389).